The following is a 153-amino-acid chain: 3-hydroxyacyl-[acyl-carrier-protein] dehydratase FabZ (153 aa).

Histidine 59 is a catalytic residue.

Belongs to the thioester dehydratase family. FabZ subfamily.

It is found in the cytoplasm. The catalysed reaction is a (3R)-hydroxyacyl-[ACP] = a (2E)-enoyl-[ACP] + H2O. Its function is as follows. Involved in unsaturated fatty acids biosynthesis. Catalyzes the dehydration of short chain beta-hydroxyacyl-ACPs and long chain saturated and unsaturated beta-hydroxyacyl-ACPs. In Thermosynechococcus vestitus (strain NIES-2133 / IAM M-273 / BP-1), this protein is 3-hydroxyacyl-[acyl-carrier-protein] dehydratase FabZ.